Reading from the N-terminus, the 201-residue chain is dTTP/UTP pyrophosphatase (201 aa).

The active-site Proton acceptor is the D79.

This sequence belongs to the Maf family. YhdE subfamily. It depends on a divalent metal cation as a cofactor.

Its subcellular location is the cytoplasm. The enzyme catalyses dTTP + H2O = dTMP + diphosphate + H(+). It carries out the reaction UTP + H2O = UMP + diphosphate + H(+). Its function is as follows. Nucleoside triphosphate pyrophosphatase that hydrolyzes dTTP and UTP. May have a dual role in cell division arrest and in preventing the incorporation of modified nucleotides into cellular nucleic acids. This is dTTP/UTP pyrophosphatase from Hahella chejuensis (strain KCTC 2396).